We begin with the raw amino-acid sequence, 173 residues long: NAD(P)H-quinone oxidoreductase subunit I, chloroplastic (173 aa).

4Fe-4S ferredoxin-type domains follow at residues G55 to D84 and R95 to E124. C64, C67, C70, C74, C104, C107, C110, and C114 together coordinate [4Fe-4S] cluster.

Belongs to the complex I 23 kDa subunit family. NDH is composed of at least 16 different subunits, 5 of which are encoded in the nucleus. [4Fe-4S] cluster serves as cofactor.

Its subcellular location is the plastid. It localises to the chloroplast thylakoid membrane. It carries out the reaction a plastoquinone + NADH + (n+1) H(+)(in) = a plastoquinol + NAD(+) + n H(+)(out). The enzyme catalyses a plastoquinone + NADPH + (n+1) H(+)(in) = a plastoquinol + NADP(+) + n H(+)(out). Functionally, NDH shuttles electrons from NAD(P)H:plastoquinone, via FMN and iron-sulfur (Fe-S) centers, to quinones in the photosynthetic chain and possibly in a chloroplast respiratory chain. The immediate electron acceptor for the enzyme in this species is believed to be plastoquinone. Couples the redox reaction to proton translocation, and thus conserves the redox energy in a proton gradient. The protein is NAD(P)H-quinone oxidoreductase subunit I, chloroplastic of Nephroselmis olivacea (Green alga).